Reading from the N-terminus, the 460-residue chain is GTPase Der (460 aa).

EngA-type G domains lie at 4–174 and 184–361; these read PQVA…PRRE and PKIA…AERS. Residues 10 to 17, 57 to 61, 126 to 129, 190 to 197, 237 to 241, and 302 to 305 contribute to the GTP site; these read GRPNVGKS, DTGGL, NKAE, DTAGI, and NKWD. The 85-residue stretch at 362 to 446 folds into the KH-like domain; the sequence is RRIPTAELNQ…PIELVFRERE (85 aa).

Belongs to the TRAFAC class TrmE-Era-EngA-EngB-Septin-like GTPase superfamily. EngA (Der) GTPase family. Associates with the 50S ribosomal subunit.

Its function is as follows. GTPase that plays an essential role in the late steps of ribosome biogenesis. This Thermomicrobium roseum (strain ATCC 27502 / DSM 5159 / P-2) protein is GTPase Der.